The chain runs to 262 residues: Cytochrome c oxidase subunit 3 (262 aa).

The next 6 helical transmembrane spans lie at 39-59 (YDIS…YQWW), 83-103 (GMIL…WAFF), 120-140 (MGII…ILLA), 163-183 (GLFF…YEYI), 198-218 (FFMA…FLLV), and 240-260 (AWYW…IYWW).

Belongs to the cytochrome c oxidase subunit 3 family. In terms of assembly, component of the cytochrome c oxidase (complex IV, CIV), a multisubunit enzyme composed of a catalytic core of 3 subunits and several supernumerary subunits. The complex exists as a monomer or a dimer and forms supercomplexes (SCs) in the inner mitochondrial membrane with ubiquinol-cytochrome c oxidoreductase (cytochrome b-c1 complex, complex III, CIII).

Its subcellular location is the mitochondrion inner membrane. The enzyme catalyses 4 Fe(II)-[cytochrome c] + O2 + 8 H(+)(in) = 4 Fe(III)-[cytochrome c] + 2 H2O + 4 H(+)(out). Its function is as follows. Component of the cytochrome c oxidase, the last enzyme in the mitochondrial electron transport chain which drives oxidative phosphorylation. The respiratory chain contains 3 multisubunit complexes succinate dehydrogenase (complex II, CII), ubiquinol-cytochrome c oxidoreductase (cytochrome b-c1 complex, complex III, CIII) and cytochrome c oxidase (complex IV, CIV), that cooperate to transfer electrons derived from NADH and succinate to molecular oxygen, creating an electrochemical gradient over the inner membrane that drives transmembrane transport and the ATP synthase. Cytochrome c oxidase is the component of the respiratory chain that catalyzes the reduction of oxygen to water. Electrons originating from reduced cytochrome c in the intermembrane space (IMS) are transferred via the dinuclear copper A center (CU(A)) of subunit 2 and heme A of subunit 1 to the active site in subunit 1, a binuclear center (BNC) formed by heme A3 and copper B (CU(B)). The BNC reduces molecular oxygen to 2 water molecules using 4 electrons from cytochrome c in the IMS and 4 protons from the mitochondrial matrix. The sequence is that of Cytochrome c oxidase subunit 3 (mt:CoIII) from Drosophila melanogaster (Fruit fly).